The following is a 1906-amino-acid chain: Alpha-2-macroglobulin homolog (1906 aa).

An N-terminal signal peptide occupies residues 1 to 21 (MIIRVCIRCFIVLTLVLGIGG). A lipid anchor (N-palmitoyl cysteine) is attached at Cys-22. Cys-22 is lipidated: S-diacylglycerol cysteine.

The protein belongs to the protease inhibitor I39 (alpha-2-macroglobulin) family. Bacterial alpha-2-macroglobulin subfamily.

Its subcellular location is the cell membrane. The sequence is that of Alpha-2-macroglobulin homolog from Nostoc sp. (strain PCC 7120 / SAG 25.82 / UTEX 2576).